Reading from the N-terminus, the 604-residue chain is Ras guanine nucleotide exchange factor H (604 aa).

Over residues 1–26 (MSNTNINVQSSTPKKSLGSSQYSLAG) the composition is skewed to polar residues. The segment at 1–61 (MSNTNINVQS…QENSIDDSGS (61 aa)) is disordered. Low complexity predominate over residues 27–49 (SSSSNLNNINNNNNNNNNNNNNS). Residues 50–61 (TGQENSIDDSGS) show a composition bias toward polar residues. The 33-residue stretch at 115–147 (NDTMLLKLIMQYFHEENLTTSLKKIQEETKVQF) folds into the LisH domain. The N-terminal Ras-GEF domain maps to 221–335 (PDGTIKAATF…AVINLKIENY (115 aa)). Positions 365–591 (DEEEIARQLC…EQPQLTLDLS (227 aa)) constitute a Ras-GEF domain.

As to quaternary structure, component of the Sca1 complex composed of at least gefA, gefH, scaA, phr, and the protein phosphatase 2A subunits pppA and pho2B. Interacts directly with gefA and phr.

It localises to the cell membrane. Promotes the exchange of Ras-bound GDP by GTP. Component of the Sca1 complex, a regulator of cell motility, chemotaxis and signal relay. The Sca1 complex is recruited to the plasma membrane in a chemoattractant- and F-actin-dependent manner and is enriched at the leading edge of chemotaxing cells where it regulates F-actin dynamics and signal relay by controlling the activation of rasC and the downstream target of rapamycin complex 2 (TORC2)-Akt/protein kinase B (PKB) pathway. This is Ras guanine nucleotide exchange factor H (gefH) from Dictyostelium discoideum (Social amoeba).